Here is a 417-residue protein sequence, read N- to C-terminus: NADH-quinone oxidoreductase subunit D (417 aa).

It belongs to the complex I 49 kDa subunit family. In terms of assembly, NDH-1 is composed of 14 different subunits. Subunits NuoB, C, D, E, F, and G constitute the peripheral sector of the complex.

The protein resides in the cell inner membrane. It carries out the reaction a quinone + NADH + 5 H(+)(in) = a quinol + NAD(+) + 4 H(+)(out). In terms of biological role, NDH-1 shuttles electrons from NADH, via FMN and iron-sulfur (Fe-S) centers, to quinones in the respiratory chain. The immediate electron acceptor for the enzyme in this species is believed to be ubiquinone. Couples the redox reaction to proton translocation (for every two electrons transferred, four hydrogen ions are translocated across the cytoplasmic membrane), and thus conserves the redox energy in a proton gradient. The polypeptide is NADH-quinone oxidoreductase subunit D (Polaromonas naphthalenivorans (strain CJ2)).